The primary structure comprises 220 residues: Cell division protein SepF (220 aa).

Residues 33 to 82 form a disordered region; sequence GAARGYARRPREDRFEEEGYIDRAGREYDDRPAPREYDEPPIYRGGYDEP. Basic and acidic residues predominate over residues 52 to 70; the sequence is YIDRAGREYDDRPAPREYD.

The protein belongs to the SepF family. In terms of assembly, homodimer. Interacts with FtsZ.

Its subcellular location is the cytoplasm. Cell division protein that is part of the divisome complex and is recruited early to the Z-ring. Probably stimulates Z-ring formation, perhaps through the cross-linking of FtsZ protofilaments. Its function overlaps with FtsA. The polypeptide is Cell division protein SepF (Mycobacterium sp. (strain JLS)).